The primary structure comprises 434 residues: Serine hydroxymethyltransferase (434 aa).

Residues leucine 133 and 137–139 (GHL) each bind (6S)-5,6,7,8-tetrahydrofolate. The residue at position 242 (lysine 242) is an N6-(pyridoxal phosphate)lysine. 366-368 (SPF) lines the (6S)-5,6,7,8-tetrahydrofolate pocket.

Belongs to the SHMT family. Homodimer. The cofactor is pyridoxal 5'-phosphate.

The protein localises to the cytoplasm. It carries out the reaction (6R)-5,10-methylene-5,6,7,8-tetrahydrofolate + glycine + H2O = (6S)-5,6,7,8-tetrahydrofolate + L-serine. Its pathway is one-carbon metabolism; tetrahydrofolate interconversion. The protein operates within amino-acid biosynthesis; glycine biosynthesis; glycine from L-serine: step 1/1. Catalyzes the reversible interconversion of serine and glycine with tetrahydrofolate (THF) serving as the one-carbon carrier. This reaction serves as the major source of one-carbon groups required for the biosynthesis of purines, thymidylate, methionine, and other important biomolecules. Also exhibits THF-independent aldolase activity toward beta-hydroxyamino acids, producing glycine and aldehydes, via a retro-aldol mechanism. The protein is Serine hydroxymethyltransferase of Erythrobacter litoralis (strain HTCC2594).